The sequence spans 268 residues: Photosystem II 22 kDa protein 1, chloroplastic (268 aa).

The N-terminal 60 residues, 1-60 (MAQSMLVSGANGTVAAASTSRLQPVRPTPFSRLVLSQPSSSLGRAVSVKTVALFGRSKTK), are a transit peptide targeting the chloroplast. 2 repeat units span residues 54–161 (FGRS…FVDD) and 164–268 (VTGL…DDEE). 4 helical membrane-spanning segments follow: residues 99–119 (VAML…KGIL), 133–153 (AEPL…GALG), 199–219 (LFVG…EIIT), and 234–254 (PINE…IAAI).

The protein belongs to the ELIP/psbS family. Expressed at low levels in leaves (at protein level).

It is found in the plastid. The protein resides in the chloroplast thylakoid membrane. Its function is as follows. Involved in high light-mediated energy-dependent nonphotochemical quenching (NPQ, qE) and thermal dissipation (TD) thus regulating energy conversion in photosystem II and protecting from photoinhibition. Also seems to regulate quantum yield of electron transport in fluctuating light conditions. This Oryza sativa subsp. indica (Rice) protein is Photosystem II 22 kDa protein 1, chloroplastic.